Here is a 652-residue protein sequence, read N- to C-terminus: Small ribosomal subunit protein mS39 (652 aa).

The N-terminal 37 residues, 1-37 (MYLSRQLRLLPRANIACSLSSSGAHYTTAAPAEDAPI), are a transit peptide targeting the mitochondrion. PPR repeat units lie at residues 129–163 (DSVV…GNPI), 225–259 (TPQS…QVQL), 260–299 (DTNT…KLRP), 300–338 (NLGT…GVNP), and 547–581 (TGQM…QHRI).

It belongs to the mitochondrion-specific ribosomal protein mS39 family.

It localises to the mitochondrion. Mitochondrial protein that may have a role in mitochondrial translation. Essential for larval development. The chain is Small ribosomal subunit protein mS39 from Drosophila melanogaster (Fruit fly).